A 308-amino-acid chain; its full sequence is tRNA pseudouridine synthase B (308 aa).

Asp37 (nucleophile) is an active-site residue.

The protein belongs to the pseudouridine synthase TruB family. Type 1 subfamily.

It carries out the reaction uridine(55) in tRNA = pseudouridine(55) in tRNA. Functionally, responsible for synthesis of pseudouridine from uracil-55 in the psi GC loop of transfer RNAs. The chain is tRNA pseudouridine synthase B from Deinococcus radiodurans (strain ATCC 13939 / DSM 20539 / JCM 16871 / CCUG 27074 / LMG 4051 / NBRC 15346 / NCIMB 9279 / VKM B-1422 / R1).